Here is a 706-residue protein sequence, read N- to C-terminus: Paxillin-like protein 1 (706 aa).

Disordered regions lie at residues 24 to 192 (ERAG…EQDL), 222 to 258 (VLDQKLGKEQQKEESSIEYESEGQQEDENDIESLNFE), 279 to 341 (AKQE…TKVE), and 514 to 537 (IDNSKSNDSHVLPNGGTTRYSSDA). The segment covering 35-64 (PFSSQRNASTGSLQASVKSPPITRQRNVSA) has biased composition (polar residues). A phosphoserine mark is found at Ser-43 and Ser-63. 2 stretches are compositionally biased toward low complexity: residues 73–86 (KSAYTASSKSAYSS) and 117–129 (SSRPSDISRSISR). Basic and acidic residues-rich tracts occupy residues 130–150 (PSERASQEDPFRFERDLDRQA) and 222–236 (VLDQKLGKEQQKEES). Residues 237–252 (SIEYESEGQQEDENDI) are compositionally biased toward acidic residues. Positions 279-290 (AKQEEKNTEPKI) are enriched in basic and acidic residues. Residues 296–308 (TRESNTPSLTMNA) are compositionally biased toward polar residues. LIM zinc-binding domains are found at residues 556 to 612 (CRAC…CQKH) and 621 to 672 (CKVC…CGNH).

The polypeptide is Paxillin-like protein 1 (PXL1) (Saccharomyces cerevisiae (strain ATCC 204508 / S288c) (Baker's yeast)).